Consider the following 1955-residue polypeptide: Protocadherin-15 (1955 aa).

An N-terminal signal peptide occupies residues methionine 1–glycine 26. The Extracellular portion of the chain corresponds to glutamine 27 to alanine 1376. Cysteine 32 and cysteine 120 form a disulfide bridge. 11 consecutive Cadherin domains span residues proline 40 to phenylalanine 147, lysine 148 to phenylalanine 265, arginine 278 to phenylalanine 395, threonine 396 to phenylalanine 509, proline 510 to phenylalanine 616, proline 617 to phenylalanine 717, proline 719 to phenylalanine 819, threonine 820 to phenylalanine 926, serine 927 to phenylalanine 1035, glutamine 1037 to phenylalanine 1144, and glutamine 1145 to leucine 1259. Asparagine 52, asparagine 97, and asparagine 201 each carry an N-linked (GlcNAc...) asparagine glycan. N-linked (GlcNAc...) asparagine glycans are attached at residues asparagine 419, asparagine 559, asparagine 662, asparagine 724, asparagine 768, asparagine 821, and asparagine 851. N-linked (GlcNAc...) asparagine glycans are attached at residues asparagine 1064, asparagine 1084, and asparagine 1175. The chain crosses the membrane as a helical span at residues leucine 1377–valine 1397. The Cytoplasmic portion of the chain corresponds to serine 1398–leucine 1955. The segment covering valine 1426 to glycine 1444 has biased composition (pro residues). 4 disordered regions span residues valine 1426–histidine 1446, glutamine 1601–asparagine 1623, cysteine 1745–alanine 1766, and isoleucine 1928–leucine 1955. Polar residues predominate over residues isoleucine 1928–valine 1941.

As to quaternary structure, antiparallel heterodimer with CDH23. Found in a complex with TMIE and LHFPL5. Interacts with LHFPL5/TMHS; this interaction is required for efficient localization to hair bundles. Interacts with MYO7A. Interacts with USH1G; this interaction may recruit USH1G to the plasma membrane. Interacts with TOMT. Isoforms CD1 and CD3 interact with TMC1 (via N-terminus) and TMC2 (via N-terminus). As to expression, expressed in brain, lung, kidney, spleen and testis. Found also in the inner and outer synaptic layers, and the nerve fiber layer in adult and fetal retinas. Found in the supporting cells, outer sulcus cells and spiral ganglion of fetal cochlea. Expressed in cytotoxic tumor-derived T- and NK-cell lines as well as biopsies of nasal NK/T-cell lymphomas. Not detected in normal or in vitro activated peripheral blood cells, CD4 or CD8 lymphocytes or NK cells. Isoform 3 is expressed in brain, heart, cerebellum and kidney. CD1 isoforms, such as isoform 1, have a limited pattern of expression and is detected in testis, retina and cochlea. CD2 isoforms, such as isoforms 4 and 5, are expressed in heart, kidney, thymus, spleen, testis, retina and cochlea. CD3 isoforms, such as isoform 6, are widely expressed.

It localises to the cell membrane. The protein localises to the secreted. Functionally, calcium-dependent cell-adhesion protein. Essential for maintenance of normal retinal and cochlear function. This Homo sapiens (Human) protein is Protocadherin-15 (PCDH15).